The following is a 258-amino-acid chain: Imidazole glycerol phosphate synthase subunit HisF (258 aa).

Catalysis depends on residues Asp11 and Asp130.

Belongs to the HisA/HisF family. As to quaternary structure, heterodimer of HisH and HisF.

Its subcellular location is the cytoplasm. The enzyme catalyses 5-[(5-phospho-1-deoxy-D-ribulos-1-ylimino)methylamino]-1-(5-phospho-beta-D-ribosyl)imidazole-4-carboxamide + L-glutamine = D-erythro-1-(imidazol-4-yl)glycerol 3-phosphate + 5-amino-1-(5-phospho-beta-D-ribosyl)imidazole-4-carboxamide + L-glutamate + H(+). Its pathway is amino-acid biosynthesis; L-histidine biosynthesis; L-histidine from 5-phospho-alpha-D-ribose 1-diphosphate: step 5/9. Its function is as follows. IGPS catalyzes the conversion of PRFAR and glutamine to IGP, AICAR and glutamate. The HisF subunit catalyzes the cyclization activity that produces IGP and AICAR from PRFAR using the ammonia provided by the HisH subunit. The protein is Imidazole glycerol phosphate synthase subunit HisF of Haemophilus influenzae (strain 86-028NP).